The primary structure comprises 454 residues: Tubulin beta-3 chain (454 aa).

GTP contacts are provided by Gln-11, Glu-75, Ser-144, Gly-148, Thr-149, Gly-150, Asn-210, and Asn-232. Glu-75 lines the Mg(2+) pocket. Residues 435-454 (TADDEFDPEVNQEEVEGDCI) form a disordered region.

This sequence belongs to the tubulin family. As to quaternary structure, dimer of alpha and beta chains. A typical microtubule is a hollow water-filled tube with an outer diameter of 25 nm and an inner diameter of 15 nM. Alpha-beta heterodimers associate head-to-tail to form protofilaments running lengthwise along the microtubule wall with the beta-tubulin subunit facing the microtubule plus end conferring a structural polarity. Microtubules usually have 13 protofilaments but different protofilament numbers can be found in some organisms and specialized cells. Mg(2+) is required as a cofactor.

It is found in the cytoplasm. The protein localises to the cytoskeleton. Tubulin is the major constituent of microtubules, a cylinder consisting of laterally associated linear protofilaments composed of alpha- and beta-tubulin heterodimers. Microtubules grow by the addition of GTP-tubulin dimers to the microtubule end, where a stabilizing cap forms. Below the cap, tubulin dimers are in GDP-bound state, owing to GTPase activity of alpha-tubulin. In Drosophila melanogaster (Fruit fly), this protein is Tubulin beta-3 chain (betaTub60D).